Consider the following 525-residue polypeptide: GMP synthase [glutamine-hydrolyzing] (525 aa).

Positions 9–207 (RILILDFGSQ…VLQLCACEKL (199 aa)) constitute a Glutamine amidotransferase type-1 domain. The active-site Nucleophile is the cysteine 86. Active-site residues include histidine 181 and glutamate 183. The region spanning 208 to 400 (WTPANIVEDA…LGLPYDMVYR (193 aa)) is the GMPS ATP-PPase domain. 235–241 (SGGVDSS) is a binding site for ATP.

In terms of assembly, homodimer.

The enzyme catalyses XMP + L-glutamine + ATP + H2O = GMP + L-glutamate + AMP + diphosphate + 2 H(+). The protein operates within purine metabolism; GMP biosynthesis; GMP from XMP (L-Gln route): step 1/1. Its function is as follows. Catalyzes the synthesis of GMP from XMP. This chain is GMP synthase [glutamine-hydrolyzing], found in Cellvibrio japonicus (strain Ueda107) (Pseudomonas fluorescens subsp. cellulosa).